Here is a 333-residue protein sequence, read N- to C-terminus: MVTIKDIAKLANVSHTTVSRALNNSPYIKEHTKKKILELAEQLNYTPNVNAKSLAMQKSHTIGLFFTSITNGTSHSFFADTIKGVNQAISEDYNLYVRGIDDLKNYDSVTPMRYDGIILMSQSDIDNSFIYHIREKNIPLVVLNRDIDDRTITNILSNDKEGSQEAVEYFIQSGHQDIAIIEGIEGFKSSQQRKEGYLSALIQHHIPIKHEYSVKGQYDMESGFQAMERLLALPNPPTAVFCSNDDMAIGAMNAIFAKGLRVPDDISVIGFDDIGFSQYITPRLSTVKRPVEKISVLGAQKLLSLISEPETKAEKILENTEFMVRDSVRRLTT.

The 55-residue stretch at valine 2 to methionine 56 folds into the HTH lacI-type domain. The H-T-H motif DNA-binding region spans isoleucine 4–asparagine 23.

In terms of biological role, transcriptional repressor for the exu locus which is required for galacturonate utilization. This chain is Probable HTH-type transcriptional repressor ExuR (exuR), found in Bacillus subtilis (strain 168).